Here is a 64-residue protein sequence, read N- to C-terminus: Disintegrin VA6 (64 aa).

The region spanning 1 to 64 (NSANPCCDPV…SDCPRNPYKS (64 aa)) is the Disintegrin domain. Intrachain disulfides connect Cys6–Cys29, Cys20–Cys26, Cys25–Cys50, and Cys38–Cys57. Positions 42-44 (RGD) match the Cell attachment site motif.

This sequence belongs to the venom metalloproteinase (M12B) family. P-II subfamily. P-IId sub-subfamily. Homodimer; disulfide-linked. In terms of tissue distribution, expressed by the venom gland.

Its subcellular location is the secreted. Its function is as follows. Poor inhibitor of platelet aggregation. The disintegrin inhibits the adhesion of cells expressing the RGD-dependent integrin alpha-5/beta-1 (ITGA5/ITGB1) to immobilized fibronectin. Inhibition on alpha-IIb/beta-3 (ITGA2B/ITGB3) is low, and there is no inhibition on alpha-1/beta-1 (ITGA1/ITGB1), alpha-2/beta-1 (ITGA2/ITGB1) and alpha-6/beta-1 (ITGA6/ITGB1). The polypeptide is Disintegrin VA6 (Vipera ammodytes ammodytes (Western sand viper)).